Here is a 256-residue protein sequence, read N- to C-terminus: Thiazole synthase (256 aa).

The Schiff-base intermediate with DXP role is filled by Lys-96. 1-deoxy-D-xylulose 5-phosphate-binding positions include Gly-157, 183–184, and 205–206; these read AG and NT.

The protein belongs to the ThiG family. In terms of assembly, homotetramer. Forms heterodimers with either ThiH or ThiS.

It is found in the cytoplasm. The catalysed reaction is [ThiS sulfur-carrier protein]-C-terminal-Gly-aminoethanethioate + 2-iminoacetate + 1-deoxy-D-xylulose 5-phosphate = [ThiS sulfur-carrier protein]-C-terminal Gly-Gly + 2-[(2R,5Z)-2-carboxy-4-methylthiazol-5(2H)-ylidene]ethyl phosphate + 2 H2O + H(+). It participates in cofactor biosynthesis; thiamine diphosphate biosynthesis. Catalyzes the rearrangement of 1-deoxy-D-xylulose 5-phosphate (DXP) to produce the thiazole phosphate moiety of thiamine. Sulfur is provided by the thiocarboxylate moiety of the carrier protein ThiS. In vitro, sulfur can be provided by H(2)S. This is Thiazole synthase from Bacillus cereus (strain 03BB102).